A 203-amino-acid chain; its full sequence is MPVVLGQKAPDFTVNTSKGPITLSNYRGKWVLLFSHPGDFTPVCTTEFIAFTERYEDFQKLGVELIGLSIDSVFSHIAWIRDIKEHFGIDIPFPIIADIDKEVAREYNLIDEKSGATVRGVFIIDPNQIVRWMIYYPAETGRNIEEIIRVIKALQFNWDRKLATPANWQPGQEGIEPAPTTVDSSFKRDNEQGVKTWYLKFVK.

One can recognise a Thioredoxin domain in the interval 3–156 (VVLGQKAPDF…IIRVIKALQF (154 aa)). Catalysis depends on cysteine 44, which acts as the Cysteine sulfenic acid (-SOH) intermediate. Arginine 119 serves as a coordination point for substrate.

The protein belongs to the peroxiredoxin family. Prx6 subfamily. Homodecamer. Pentamer of dimers that assemble into a ring structure.

Its subcellular location is the cytoplasm. It catalyses the reaction a hydroperoxide + [thioredoxin]-dithiol = an alcohol + [thioredoxin]-disulfide + H2O. In terms of biological role, thiol-specific peroxidase that catalyzes the reduction of hydrogen peroxide and organic hydroperoxides to water and alcohols, respectively. Plays a role in cell protection against oxidative stress by detoxifying peroxides. This chain is Peroxiredoxin, found in Thermoplasma volcanium (strain ATCC 51530 / DSM 4299 / JCM 9571 / NBRC 15438 / GSS1).